A 212-amino-acid polypeptide reads, in one-letter code: uncharacterized protein (212 aa).

The helical transmembrane segment at 11–31 threads the bilayer; sequence NLIFFQFIVYFFFISLTILII.

It is found in the membrane. This is an uncharacterized protein from Rickettsia prowazekii (strain Madrid E).